A 168-amino-acid polypeptide reads, in one-letter code: ATP synthase subunit b (168 aa).

A helical membrane pass occupies residues 9–29 (AIPFGTIAYTLVVFLILLVML).

Belongs to the ATPase B chain family. As to quaternary structure, F-type ATPases have 2 components, F(1) - the catalytic core - and F(0) - the membrane proton channel. F(1) has five subunits: alpha(3), beta(3), gamma(1), delta(1), epsilon(1). F(0) has three main subunits: a(1), b(2) and c(10-14). The alpha and beta chains form an alternating ring which encloses part of the gamma chain. F(1) is attached to F(0) by a central stalk formed by the gamma and epsilon chains, while a peripheral stalk is formed by the delta and b chains.

It is found in the cell membrane. F(1)F(0) ATP synthase produces ATP from ADP in the presence of a proton or sodium gradient. F-type ATPases consist of two structural domains, F(1) containing the extramembraneous catalytic core and F(0) containing the membrane proton channel, linked together by a central stalk and a peripheral stalk. During catalysis, ATP synthesis in the catalytic domain of F(1) is coupled via a rotary mechanism of the central stalk subunits to proton translocation. Functionally, component of the F(0) channel, it forms part of the peripheral stalk, linking F(1) to F(0). The polypeptide is ATP synthase subunit b (Bacillus cytotoxicus (strain DSM 22905 / CIP 110041 / 391-98 / NVH 391-98)).